The following is a 235-amino-acid chain: 7-carboxy-7-deazaguanine synthase (235 aa).

Residues 27-29 (LQG) and Arg42 each bind substrate. The region spanning 33-235 (FSGQPSVFVR…VQVHKILKIA (203 aa)) is the Radical SAM core domain. [4Fe-4S] cluster is bound by residues Cys46, Cys50, and Cys53. A Mg(2+)-binding site is contributed by Thr55. Position 87 (Thr87) interacts with substrate. S-adenosyl-L-methionine is bound by residues Gly89 and 133–135 (SPK).

Belongs to the radical SAM superfamily. 7-carboxy-7-deazaguanine synthase family. In terms of assembly, homodimer. [4Fe-4S] cluster serves as cofactor. S-adenosyl-L-methionine is required as a cofactor. It depends on Mg(2+) as a cofactor.

The catalysed reaction is 6-carboxy-5,6,7,8-tetrahydropterin + H(+) = 7-carboxy-7-deazaguanine + NH4(+). The protein operates within purine metabolism; 7-cyano-7-deazaguanine biosynthesis. In terms of biological role, catalyzes the complex heterocyclic radical-mediated conversion of 6-carboxy-5,6,7,8-tetrahydropterin (CPH4) to 7-carboxy-7-deazaguanine (CDG), a step common to the biosynthetic pathways of all 7-deazapurine-containing compounds. This Rhodospirillum rubrum (strain ATCC 11170 / ATH 1.1.1 / DSM 467 / LMG 4362 / NCIMB 8255 / S1) protein is 7-carboxy-7-deazaguanine synthase.